Here is a 509-residue protein sequence, read N- to C-terminus: Photosystem II CP47 reaction center protein (509 aa).

Transmembrane regions (helical) follow at residues 21-36, 101-115, 140-156, 203-218, 237-253, and 458-473; these read AVHMMHTALVAGWAGS, IVFSGLCFLAAIWHW, GIHLFLSGVACFGFGAF, IAAGTLGILAGLFHLS, VLSSSSIAAVFFAAFVV, and SFALLFFFGHIWHGSR.

Belongs to the PsbB/PsbC family. PsbB subfamily. PSII is composed of 1 copy each of membrane proteins PsbA, PsbB, PsbC, PsbD, PsbE, PsbF, PsbH, PsbI, PsbJ, PsbK, PsbL, PsbM, PsbT, PsbX, PsbY, PsbZ, Psb30/Ycf12, at least 3 peripheral proteins of the oxygen-evolving complex and a large number of cofactors. It forms dimeric complexes. Binds multiple chlorophylls. PSII binds additional chlorophylls, carotenoids and specific lipids. is required as a cofactor.

Its subcellular location is the plastid. It localises to the chloroplast thylakoid membrane. Functionally, one of the components of the core complex of photosystem II (PSII). It binds chlorophyll and helps catalyze the primary light-induced photochemical processes of PSII. PSII is a light-driven water:plastoquinone oxidoreductase, using light energy to abstract electrons from H(2)O, generating O(2) and a proton gradient subsequently used for ATP formation. The chain is Photosystem II CP47 reaction center protein from Populus deltoides (Eastern poplar).